The chain runs to 129 residues: Small ribosomal subunit protein uS11 (129 aa).

It belongs to the universal ribosomal protein uS11 family. Part of the 30S ribosomal subunit. Interacts with proteins S7 and S18. Binds to IF-3.

Functionally, located on the platform of the 30S subunit, it bridges several disparate RNA helices of the 16S rRNA. Forms part of the Shine-Dalgarno cleft in the 70S ribosome. The polypeptide is Small ribosomal subunit protein uS11 (Bartonella bacilliformis (strain ATCC 35685 / KC583 / Herrer 020/F12,63)).